Consider the following 1369-residue polypeptide: DNA-directed RNA polymerase subunit beta' (1369 aa).

The interval 1–26 is disordered; that stretch reads MTSSSPKTRKSSTKSKAKRGSKSKKA. Residues 7–24 are compositionally biased toward basic residues; the sequence is KTRKSSTKSKAKRGSKSK. Cys-253, Cys-320, Cys-327, and Cys-330 together coordinate Zn(2+). Positions 1294–1369 are disordered; it reads TVDMPSSPVA…LQEEGLLSDE (76 aa). The segment covering 1342 to 1351 has biased composition (acidic residues); sequence DDELSAEDQM. Residues 1357–1369 are compositionally biased toward low complexity; sequence LEGLQEEGLLSDE.

This sequence belongs to the RNA polymerase beta' chain family. RpoC2 subfamily. As to quaternary structure, in cyanobacteria the RNAP catalytic core is composed of 2 alpha, 1 beta, 1 beta', 1 gamma and 1 omega subunit. When a sigma factor is associated with the core the holoenzyme is formed, which can initiate transcription. Zn(2+) is required as a cofactor.

The catalysed reaction is RNA(n) + a ribonucleoside 5'-triphosphate = RNA(n+1) + diphosphate. DNA-dependent RNA polymerase catalyzes the transcription of DNA into RNA using the four ribonucleoside triphosphates as substrates. The sequence is that of DNA-directed RNA polymerase subunit beta' from Prochlorococcus marinus (strain NATL2A).